The following is a 958-amino-acid chain: Dermatan-sulfate epimerase (958 aa).

Residues 1–22 form the signal peptide; it reads MRTHTRGAPSVFFIYLLCFVSA. Over 23-902 the chain is Lumenal; that stretch reads YITDENPEVM…APSLSASYTR (880 aa). Asn-183 carries N-linked (GlcNAc...) (complex) asparagine glycosylation. The active-site Proton donor is His-205. Residue Tyr-261 is part of the active site. Asn-336 is a glycosylation site (N-linked (GlcNAc...) (high mannose) asparagine). An N-linked (GlcNAc...) (complex) asparagine glycan is attached at Asn-411. Mn(2+)-binding residues include His-452 and Glu-470. The active site involves Tyr-473. Position 481 (Asn-481) interacts with Mn(2+). An N-linked (GlcNAc...) (complex) asparagine glycan is attached at Asn-642. Residue Asn-648 is glycosylated (N-linked (GlcNAc...) (paucimannose) asparagine). Residues 903–923 traverse the membrane as a helical segment; the sequence is LFLILNIAIFFVMLAMQLTYF. At 924 to 933 the chain is on the cytoplasmic side; that stretch reads QRAQSLHGQR. A helical transmembrane segment spans residues 934–954; it reads CLYAVLLIDSCILLWLYSSCS. Residues 955-958 are Lumenal-facing; it reads QSQC.

It belongs to the dermatan-sulfate isomerase family. It depends on Mn(2+) as a cofactor. Post-translationally, N-glycosylated. Glycosylation is important for enzymatic activity. Ubiquitously expressed with higher expression in kidney and ovary and lower expression in brain, colon and thymus. Also expressed in renal cell carcinomas, brain tumors, and in a part of melanomas and adenocarcinomas from organs other than the breast. Expressed in squamous cell carcinomas (SCC), glioma, and some adenocarcinoma cell lines, but not in breast cancer cell lines or any normal tissues (at protein level).

It localises to the endoplasmic reticulum membrane. The protein resides in the golgi apparatus membrane. Its subcellular location is the cytoplasmic vesicle membrane. It is found in the microsome membrane. It catalyses the reaction chondroitin 4'-sulfate = dermatan 4'-sulfate. It participates in glycan metabolism; chondroitin sulfate biosynthesis. The protein operates within glycan metabolism; heparan sulfate biosynthesis. Its function is as follows. Converts D-glucuronic acid to L-iduronic acid (IdoUA) residues. Plays an important role in the biosynthesis of the glycosaminoglycan/mucopolysaccharide dermatan sulfate. The sequence is that of Dermatan-sulfate epimerase (DSE) from Homo sapiens (Human).